The primary structure comprises 304 residues: DCN1-like protein 3 (304 aa).

Disordered regions lie at residues 1-87 (MGQC…EESS) and 285-304 (VEGR…EEQT). A lipid anchor (N-myristoyl glycine) is attached at glycine 2. Residues 86 to 278 (SSLQRLEELF…LFDTFVEWEM (193 aa)) enclose the DCUN1 domain.

Part of a complex containing DCUN1D3, CUL3 and RBX1. Interacts (via the DCUN1 domain) with the unneddylated cullins: interacts with CUL1, CUL2, CUL3, CUL4A, CUL4B and CUL5; these interactions promote the cullin neddylation and the identity of the cullin dictates the affinity of the interaction. Interacts preferentially with CUL3; this interaction triggers the relocalization of CUL3 to the cell membrane where CUL3 is neddylated. Interacts (via DCUN1 domain) with RBX1. May also interact with regulators or subunits of cullin-RING ligases such as RNF7, ELOB and DDB1; these interactions are bridged by cullins. Interacts (via DCUN1 domain) with CAND1; this interaction is bridged by cullins and strongly inhibits cullin neddylation. These CAND-cullin-DCNL complexes can only be neddylated in the presence of a substrate adapter. Interacts (via DCUN1 domain) with the N-terminally acetylated form of UBE2M and UBE2F.

The protein resides in the cell membrane. It localises to the cytoplasm. Its subcellular location is the nucleus. It is found in the perinuclear region. Its function is as follows. Contributes to the neddylation of all cullins by transferring NEDD8 from N-terminally acetylated NEDD8-conjugating E2s enzyme to different cullin C-terminal domain-RBX complexes and may play a role in the cell cycle progression by regulating the SCF ubiquitin E3 ligase complex, after UV damage. At the cell membrane, can promote and as well inhibit cullins neddylation. In Rattus norvegicus (Rat), this protein is DCN1-like protein 3.